Reading from the N-terminus, the 190-residue chain is Large ribosomal subunit protein bL25 (190 aa).

The protein belongs to the bacterial ribosomal protein bL25 family. CTC subfamily. In terms of assembly, part of the 50S ribosomal subunit; part of the 5S rRNA/L5/L18/L25 subcomplex. Contacts the 5S rRNA. Binds to the 5S rRNA independently of L5 and L18.

Its function is as follows. This is one of the proteins that binds to the 5S RNA in the ribosome where it forms part of the central protuberance. The polypeptide is Large ribosomal subunit protein bL25 (Neisseria meningitidis serogroup C / serotype 2a (strain ATCC 700532 / DSM 15464 / FAM18)).